Consider the following 351-residue polypeptide: Terpene cyclase sdgD (351 aa).

The next 9 membrane-spanning stretches (helical) occupy residues 7–27, 62–82, 89–109, 126–146, 160–180, 193–213, 229–249, 281–301, and 316–336; these read INFI…TILI, TGVP…WPVI, LSLL…LLLL, WVGL…YCAI, IPHV…LVAL, VVVA…FMAS, IYIF…LASL, FLQW…VAVY, and LEVC…LLIW.

It belongs to the membrane-bound ascI terpene cyclase family.

It is found in the membrane. The protein operates within secondary metabolite biosynthesis. Its function is as follows. Epoxide hydrolase; part of the gene cluster that mediates the biosynthesis of the polyenes aspernidgulenes. The carbon backbone of aspernidgulenes is synthesized by the HR-PKS sdgA, which accepts acetyl-CoA as the starter unit and performs malonyl-CoA extensions as well as regioselective methylation and reduction. The resulting nonaketide offloads the HR-PKS by intramolecular lactonization to yield the 5,6-dihydro-alpha-pyrone-containing hexaenoic acids preaspernidgulene A1 and A2. The FAD-dependent monooxygenase sdgC then installs the first epoxide on the penultimate double bond. Subsequently, the FAD-dependent monooxygenase sdgF presumably generates a ketone intermediate through Meinwald rearrangement involving a hydride shift. Next, sdgC introduces another epoxide on the last olefin of the ketone intermediate after E/Z isomerization. The epoxide hydrolase sdgD then catalyzes stereospecific cyclization of the 5,6-dihydro-alpha-pyrone and opening of the epoxide ring to form an oxygenated trimethylcyclopentanone and an oxabicyclo[2.2.1]heptane unit. Finally, the bicyclic unit undergoes hydrolytic cleavage, either spontaneously or catalyzed by sdgD, to assemble the dimethyl-gamma-lactone moiety in aspernidgulene A1. The chain is Terpene cyclase sdgD from Emericella nidulans (strain FGSC A4 / ATCC 38163 / CBS 112.46 / NRRL 194 / M139) (Aspergillus nidulans).